The following is a 200-amino-acid chain: Glycerol-3-phosphate acyltransferase (200 aa).

Helical transmembrane passes span 9–29 (IIIG…AYFW), 54–74 (VPGM…VLLA), 81–101 (DIAV…PLWL), 112–132 (GAGA…LVWL), 140–160 (YVSL…ALLN), and 165–185 (YLIF…SNIG).

Belongs to the PlsY family. As to quaternary structure, probably interacts with PlsX.

Its subcellular location is the cell membrane. It catalyses the reaction an acyl phosphate + sn-glycerol 3-phosphate = a 1-acyl-sn-glycero-3-phosphate + phosphate. The protein operates within lipid metabolism; phospholipid metabolism. Catalyzes the transfer of an acyl group from acyl-phosphate (acyl-PO(4)) to glycerol-3-phosphate (G3P) to form lysophosphatidic acid (LPA). This enzyme utilizes acyl-phosphate as fatty acyl donor, but not acyl-CoA or acyl-ACP. The polypeptide is Glycerol-3-phosphate acyltransferase (Desulforamulus reducens (strain ATCC BAA-1160 / DSM 100696 / MI-1) (Desulfotomaculum reducens)).